Here is a 247-residue protein sequence, read N- to C-terminus: Adenosylcobinamide-GDP ribazoletransferase (247 aa).

4 consecutive transmembrane segments (helical) span residues isoleucine 34–valine 54, cysteine 59–phenylalanine 79, glycine 113–leucine 133, and valine 194–isoleucine 214.

It belongs to the CobS family. Mg(2+) is required as a cofactor.

It is found in the cell inner membrane. It catalyses the reaction alpha-ribazole + adenosylcob(III)inamide-GDP = adenosylcob(III)alamin + GMP + H(+). The catalysed reaction is alpha-ribazole 5'-phosphate + adenosylcob(III)inamide-GDP = adenosylcob(III)alamin 5'-phosphate + GMP + H(+). Its pathway is cofactor biosynthesis; adenosylcobalamin biosynthesis; adenosylcobalamin from cob(II)yrinate a,c-diamide: step 7/7. In terms of biological role, joins adenosylcobinamide-GDP and alpha-ribazole to generate adenosylcobalamin (Ado-cobalamin). Also synthesizes adenosylcobalamin 5'-phosphate from adenosylcobinamide-GDP and alpha-ribazole 5'-phosphate. This is Adenosylcobinamide-GDP ribazoletransferase from Escherichia coli (strain ATCC 8739 / DSM 1576 / NBRC 3972 / NCIMB 8545 / WDCM 00012 / Crooks).